Reading from the N-terminus, the 902-residue chain is Leucine-rich repeat-containing G-protein coupled receptor 5 (902 aa).

The signal sequence occupies residues 1 to 22 (MDTSKTSFFLFSVLCSLQLVGA). The Extracellular portion of the chain corresponds to 23–558 (ARPGKQQRSC…HLFGSWLTRT (536 aa)). 2 cysteine pairs are disulfide-bonded: Cys-32–Cys-38 and Cys-36–Cys-49. Positions 32-61 (CPTPCECEQEGMLVRVDCSDRALTSLPRNL) constitute an LRRNT domain. LRR repeat units follow at residues 41-61 (EGMLVRVDCSDRALTSLPRNL), 62-85 (SIFTSYLDLSMNNITNLPSNVMHN), 86-109 (LHFLEELRLAGNDLTYIPKGAFAG), 111-133 (GSLKVLMLQNNLLRQVPSEALHN), 134-157 (LRSLQSLRLDANHISYVPPSSFNG), 159-181 (FSLRHLWLDDNSLTEIPVRALES), 182-205 (LSALQAMTLALNKIHHIPDYAFRN), 207-229 (SSLVVLHLHNNRIYSLGKKCFDG), 230-253 (LHSLETLDLNYNNLDEFPAAIKTL), 254-276 (KNLKELGFHSNNIKSIPEQAFIG), 278-300 (PSLITIHFYDNPIQHVGRSAFQH), 302-324 (PELRTLILNGASQITEFPDLTGT), 325-347 (TSLESLTLTGAQLVYLPSAVCTQ), 348-372 (LPNLQVLDLSYNHIKDLPSFSGCQR), 374-393 (QKIDLRHNEVYEIRSTTFQQ), 394-417 (LVGLRSLDLAWNKIAVIHPNSFSS), and 418-441 (LPSLIKLDLSSNHLTSFPVTGLHG). N-linked (GlcNAc...) asparagine glycosylation is found at Asn-60 and Asn-74. N-linked (GlcNAc...) asparagine glycosylation occurs at Asn-205. A disulfide bridge links Cys-345 with Cys-370. The cysteines at positions 476 and 537 are disulfide-linked. N-linked (GlcNAc...) asparagine glycosylation occurs at Asn-496. The chain crosses the membrane as a helical span at residues 559–579 (GVWLIVLLSFVCNALVIATVF). Residues 580 to 589 (RPLSYVPSIK) lie on the Cytoplasmic side of the membrane. A helical transmembrane segment spans residues 590–610 (LLIGLIAIMNTLMGLSSGVLA). The LRR 18 repeat unit spans residues 598–619 (MNTLMGLSSGVLATVDALTFGN). The Extracellular segment spans residues 611-634 (TVDALTFGNFAQYGAWWESGVGCQ). Cys-633 and Cys-708 form a disulfide bridge. A helical membrane pass occupies residues 635–655 (ITGFLSVFAAETSIFLLTVAA). Residues 656–678 (LERGFSIKCTTKFETKSSFINVK) are Cytoplasmic-facing. The chain crosses the membrane as a helical span at residues 679-699 (LSIVFCFLLSIVIAVSPLLSG). At 700–718 (STYGTSPLCFPLLFGDPSS) the chain is on the extracellular side. Residues 719–739 (MGFMVALVLLNSLCFLVMTIA) traverse the membrane as a helical segment. Over 740–763 (YTKLYCSLEKGELENIWDCSMVKH) the chain is Cytoplasmic. Residues 764–784 (IALLLFTNCILYCPVAFLSFS) traverse the membrane as a helical segment. Residues 785-798 (SLLNLTFISPEVNK) lie on the Extracellular side of the membrane. Asn-788 and Asn-797 each carry an N-linked (GlcNAc...) asparagine glycan. Residues 799 to 819 (SILLLIIPLPACLNPLLYILF) traverse the membrane as a helical segment. Residues 820 to 902 (NPHFKEDIGS…LSAVAFVPCH (83 aa)) lie on the Cytoplasmic side of the membrane.

This sequence belongs to the G-protein coupled receptor 1 family.

It is found in the cell membrane. It localises to the golgi apparatus. Its subcellular location is the trans-Golgi network membrane. Functionally, receptor for R-spondins that potentiates the canonical Wnt signaling pathway and acts as a stem cell marker of the intestinal epithelium and the hair follicle. Upon binding to R-spondins (RSPO1, RSPO2, RSPO3 or RSPO4), associates with phosphorylated LRP6 and frizzled receptors that are activated by extracellular Wnt receptors, triggering the canonical Wnt signaling pathway to increase expression of target genes. In contrast to classical G-protein coupled receptors, does not activate heterotrimeric G-proteins to transduce the signal. Involved in the development and/or maintenance of the adult intestinal stem cells during postembryonic development. The protein is Leucine-rich repeat-containing G-protein coupled receptor 5 (lgr5) of Xenopus tropicalis (Western clawed frog).